The chain runs to 994 residues: Chloride channel protein 1 (994 aa).

Residues 1–118 are Cytoplasmic-facing; sequence MERSQSQRHG…VLRRKLGEDW (118 aa). The helical transmembrane segment at 119 to 150 threads the bilayer; it reads IFLVLLGLLMALVSWCMDYVSAKSLQAYKWTY. Residues 151 to 158 lie on the Extracellular side of the membrane; that stretch reads AQMKPSLP. A helical membrane pass occupies residues 159–179; the sequence is LQYLAWVTFPLILILFSALFC. Topologically, residues 180-183 are cytoplasmic; sequence QLIS. An intramembrane region (note=Loop between two helices) is located at residues 184–189; sequence PQAVGS. A Selectivity filter part_1 motif is present at residues 188 to 192; sequence GSGIP. Residue S189 participates in chloride binding. The helical intramembrane region spans 190 to 195; it reads GIPEMK. Topologically, residues 196 to 208 are cytoplasmic; it reads TILRGVVLKEYLT. The helical intramembrane region spans 209 to 224; the sequence is LKAFVAKVVALTAGLG. The segment at residues 225–230 is an intramembrane region (note=Loop between two helices); the sequence is SGIPVG. Positions 230-234 match the Selectivity filter part_2 motif; it reads GKEGP. An intramembrane region (helical) is located at residues 231-246; that stretch reads KEGPFVHIASICAAVL. Over 247–268 the chain is Cytoplasmic; it reads SKFMSMFSGVYEQPYYYTDILT. 2 intramembrane regions (helical) span residues 269–280 and 281–290; these read VGCAVGVGCCFG and TPLGGVLFSI. Residues 291 to 301 are Cytoplasmic-facing; sequence EVTSTYFAVRN. Residues 302-321 traverse the membrane as a helical segment; sequence YWRGFFAATFSAFVFRVLAV. The Extracellular segment spans residues 322–347; it reads WNKDAVTITALFRTNFRMDFPFDLKE. The chain crosses the membrane as a helical span at residues 348-376; that stretch reads LPAFAVIGICCGFLGAVFVYLHRQVMLGV. At 377-390 the chain is on the cytoplasmic side; it reads RKHKCLSQFLAKHR. Residues 391 to 408 form a helical membrane-spanning segment; the sequence is LLYPGIVTFVIASLTFPP. The Extracellular portion of the chain corresponds to 409–414; sequence GMGQFM. An intramembrane region (note=Loop between two helices) is located at residues 415–418; that stretch reads AGEL. The segment at residues 419-426 is an intramembrane region (helical); it reads MPREAIST. Residues 427–457 lie on the Extracellular side of the membrane; sequence LFDNNTWVKHIGDPQSLGQSAVWLHPQVNVI. Positions 458–475 form an intramembrane region, helical; it reads IIILLFFVMKFWMSIVAT. An intramembrane region (note=Loop between two helices) is located at residues 476–482; it reads TMPIPCG. A Selectivity filter part_3 motif is present at residues 482–486; that stretch reads GGFMP. Residues 483-498 constitute an intramembrane region (helical); sequence GFMPVFVLGAAFGRLV. F484 serves as a coordination point for chloride. Topologically, residues 499–521 are extracellular; that stretch reads GEIMAMLFPEGILFDDIIYKILP. Positions 522-538 form an intramembrane region, helical; the sequence is GGYAVIGAAALTGAVSH. Residues 539–540 constitute an intramembrane region (note=Loop between two helices); the sequence is TV. The helical intramembrane region spans 541–554; it reads STAVICFELTGQIA. Over 555 to 557 the chain is Extracellular; it reads HIL. The helical intramembrane region spans 558–571; that stretch reads PMMVAVILANMVAQ. The note=Loop between two helices intramembrane region spans 572–575; it reads SLQP. The helical intramembrane region spans 576-578; that stretch reads SLY. Residue Y578 participates in chloride binding. Topologically, residues 579-994 are cytoplasmic; the sequence is DSIIQVKKLP…DEEDEDELIL (416 aa). The region spanning 609–668 is the CBS 1 domain; it reads MVRDVKFVSASCTYGELRNLLQATTVKTLPLVDSKDSMILLGSVERSELQSLLQRHLCAE. Residues 710–770 are disordered; it reads EDEDEDLSRK…PEASDSADQR (61 aa). The segment covering 725 to 739 has biased composition (pro residues); sequence TPAPPPPSPPPPPSQ. Residues 827–882 form the CBS 2 domain; sequence IDQSPFQLVEQTTLHKTHTLFSLLGLHLAYVTSMGKLRGVLALEELQKAIEGHTKS. Disordered stretches follow at residues 886-954 and 971-994; these read LRPP…ARAE and ELADILHGPSLRSTDEEDEDELIL. S892 carries the post-translational modification Phosphoserine. Pro residues predominate over residues 933-943; that stretch reads PETPVPPPSPE. Residues 985–994 are compositionally biased toward acidic residues; the sequence is DEEDEDELIL.

This sequence belongs to the chloride channel (TC 2.A.49) family. ClC-1/CLCN1 subfamily. In terms of assembly, homodimer. As to expression, predominantly expressed in skeletal muscles.

The protein localises to the cell membrane. It localises to the sarcolemma. The protein resides in the T-tubule. It carries out the reaction chloride(in) = chloride(out). The catalysed reaction is thiocyanate(in) = thiocyanate(out). The enzyme catalyses bromide(in) = bromide(out). It catalyses the reaction nitrate(in) = nitrate(out). It carries out the reaction iodide(out) = iodide(in). Modulated by membrane voltage with depolarization favouring channel opening and hyperpolarization favouring channel closure. Inhibited by acidic pH and ATP binding due to a shift of voltage dependence of common gating to more positive voltages. Inhibited by 9-anthracene-carboxylic. Its function is as follows. Voltage-gated chloride channel involved in skeletal muscle excitability. Generates most of the plasma membrane chloride conductance in skeletal muscle fibers, stabilizes the resting membrane potential and contributes to the repolarization phase during action potential firing. Forms a homodimeric channel where each subunit has its own ion conduction pathway. Conducts double-barreled currents controlled by two types of gates, two fast glutamate gates that control each subunit independently and a slow common gate that opens and shuts off both subunits simultaneously. Has a significant open probability at muscle resting potential and is further activated upon membrane depolarization. Permeable to small monovalent anions with ion selectivity for chloride &gt; thiocyanate &gt; bromide &gt; nitrate &gt; iodide. The polypeptide is Chloride channel protein 1 (Clcn1) (Mus musculus (Mouse)).